Consider the following 481-residue polypeptide: uncharacterized protein (481 aa).

This is an uncharacterized protein from Cryphonectria parasitica (Chestnut blight fungus).